The primary structure comprises 117 residues: G antigen 13 (117 aa).

The tract at residues 1–117 (MSWRGRSTYY…PEEGEKQSQC (117 aa)) is disordered. 2 stretches are compositionally biased toward acidic residues: residues 32–45 (FSDE…EEGE) and 87–96 (ECEDGPDGQE). The segment covering 103–117 (EEVKTPEEGEKQSQC) has biased composition (basic and acidic residues).

Belongs to the GAGE family.

In Homo sapiens (Human), this protein is G antigen 13.